The sequence spans 442 residues: Ribosome biogenesis protein NOP53 (442 aa).

Positions 242–264 (KPSSNTNLKKIEDKTPRQAQKSV) are disordered.

This sequence belongs to the NOP53 family.

It is found in the nucleus. Its subcellular location is the nucleolus. The protein resides in the nucleoplasm. In terms of biological role, may play a role in ribosome biogenesis. In Arabidopsis thaliana (Mouse-ear cress), this protein is Ribosome biogenesis protein NOP53.